The sequence spans 209 residues: Pyridoxal phosphate homeostasis protein (209 aa).

At Lys-31 the chain carries N6-(pyridoxal phosphate)lysine.

The protein belongs to the pyridoxal phosphate-binding protein YggS/PROSC family.

Its function is as follows. Pyridoxal 5'-phosphate (PLP)-binding protein, which is involved in PLP homeostasis. The protein is Pyridoxal phosphate homeostasis protein of Deinococcus radiodurans (strain ATCC 13939 / DSM 20539 / JCM 16871 / CCUG 27074 / LMG 4051 / NBRC 15346 / NCIMB 9279 / VKM B-1422 / R1).